The following is a 110-amino-acid chain: Large ribosomal subunit protein uL22 (110 aa).

It belongs to the universal ribosomal protein uL22 family. In terms of assembly, part of the 50S ribosomal subunit.

Functionally, this protein binds specifically to 23S rRNA; its binding is stimulated by other ribosomal proteins, e.g. L4, L17, and L20. It is important during the early stages of 50S assembly. It makes multiple contacts with different domains of the 23S rRNA in the assembled 50S subunit and ribosome. The globular domain of the protein is located near the polypeptide exit tunnel on the outside of the subunit, while an extended beta-hairpin is found that lines the wall of the exit tunnel in the center of the 70S ribosome. The chain is Large ribosomal subunit protein uL22 from Vesicomyosocius okutanii subsp. Calyptogena okutanii (strain HA).